Here is a 213-residue protein sequence, read N- to C-terminus: Pyrrolidone-carboxylate peptidase (213 aa).

Residues glutamate 78, cysteine 141, and histidine 165 contribute to the active site.

This sequence belongs to the peptidase C15 family. As to quaternary structure, homotetramer.

The protein localises to the cytoplasm. It carries out the reaction Release of an N-terminal pyroglutamyl group from a polypeptide, the second amino acid generally not being Pro.. Its function is as follows. Removes 5-oxoproline from various penultimate amino acid residues except L-proline. The polypeptide is Pyrrolidone-carboxylate peptidase (Clostridium perfringens (strain ATCC 13124 / DSM 756 / JCM 1290 / NCIMB 6125 / NCTC 8237 / Type A)).